Here is a 148-residue protein sequence, read N- to C-terminus: Large ribosomal subunit protein bL9 (148 aa).

The protein belongs to the bacterial ribosomal protein bL9 family.

Binds to the 23S rRNA. The chain is Large ribosomal subunit protein bL9 from Caldicellulosiruptor saccharolyticus (strain ATCC 43494 / DSM 8903 / Tp8T 6331).